A 771-amino-acid chain; its full sequence is MDFIDFDTFTKDASGSDNDVFPQPQPPLSLPIASNLDQFSKKLSNLVLPGNILNNDNTKPSNEISEVDNVMEKYAKMSIDLIKRETGDVQLENEEDSKESSVRTSLSTRLSRVLNDSLSDATIREIFSNLQERFDKESNGYVVDLIESGIVGSMSRKKFKGRIESELIRNQSNILKQYQPIVKQLKQIEVKLNKLNELSVQTNDKINKNFDFSNKLNLEIKDLNDNKRLIGLKKNLLISFKEKFTLNEYEEFVLNSGDLNNEFFTTLARAERINENCSILLSLDNPQLGLKIIAKSNQMINRSIDRIVSYTNKTLGNMYSLSSKSRLATLHQCFKYLQNKLNYFNSIVNTFSESRSKVLVDEFNRQVQGDFEVNGQGRSSSISSDSRPIYMSAHDPVRFVGDLLAYVHSVSVNESETITSIFTMGDDNDKEFENIIQDVTDKILQSLSRPIKARVEQIVSTETKLSTLVQIFNLVELYNIMFTKQLGKAGNIVETVKQLIKVCQGRIFMIISNRLATIKNKNSTKLDLNLDLQPPEWIIEFYSDILPIVDQITTETILNLSPEENEKFLNLIVNEPIQVFNEHVDHNKVFSEKKDVLIIKSNFLDLILSKTIPVSLLSEKVLEVNEMIDKLTEEITQLELNNMLGQCGLYDYFNIINMICPFSDDFFEVSIYEPIKENKLYTKDSFVQVDEKVQEFFPSAMIEMQQSLLKLNSPIVVNQIIDNSFMQFVKFYCKLDLINKEYLDFSFTWSDMEIATLVGIEDVYSKDISIM.

Belongs to the COG6 family.

It is found in the golgi apparatus membrane. In terms of biological role, acts as a component of the peripheral membrane COG complex that is involved in intra-Golgi protein trafficking. COG is located at the cis-Golgi, and regulates tethering of retrograde intra-Golgi vesicles and possibly a number of other membrane trafficking events. This chain is Conserved oligomeric Golgi complex subunit 6 (COG6), found in Candida albicans (strain SC5314 / ATCC MYA-2876) (Yeast).